A 210-amino-acid chain; its full sequence is Uracil phosphoribosyltransferase (210 aa).

Residues arginine 78, arginine 103, and 130-138 (DPMLATGGT) contribute to the 5-phospho-alpha-D-ribose 1-diphosphate site. Uracil is bound by residues isoleucine 193 and 198-200 (GDA). Residue aspartate 199 participates in 5-phospho-alpha-D-ribose 1-diphosphate binding.

It belongs to the UPRTase family. Mg(2+) serves as cofactor.

The catalysed reaction is UMP + diphosphate = 5-phospho-alpha-D-ribose 1-diphosphate + uracil. The protein operates within pyrimidine metabolism; UMP biosynthesis via salvage pathway; UMP from uracil: step 1/1. Allosterically activated by GTP. Its function is as follows. Catalyzes the conversion of uracil and 5-phospho-alpha-D-ribose 1-diphosphate (PRPP) to UMP and diphosphate. This is Uracil phosphoribosyltransferase from Xanthomonas axonopodis pv. citri (strain 306).